Reading from the N-terminus, the 306-residue chain is Homoserine kinase (306 aa).

Residue Pro95 to Ala105 coordinates ATP.

It belongs to the GHMP kinase family. Homoserine kinase subfamily.

The protein localises to the cytoplasm. The enzyme catalyses L-homoserine + ATP = O-phospho-L-homoserine + ADP + H(+). The protein operates within amino-acid biosynthesis; L-threonine biosynthesis; L-threonine from L-aspartate: step 4/5. In terms of biological role, catalyzes the ATP-dependent phosphorylation of L-homoserine to L-homoserine phosphate. This is Homoserine kinase from Mycobacteroides abscessus (strain ATCC 19977 / DSM 44196 / CCUG 20993 / CIP 104536 / JCM 13569 / NCTC 13031 / TMC 1543 / L948) (Mycobacterium abscessus).